Consider the following 389-residue polypeptide: DNA damage checkpoint control protein RAD17 (389 aa).

Residues 358 to 389 (LAPPSAFPAEETQDPDESYHPAPSNTDIPLFL) are disordered. The segment covering 380 to 389 (PSNTDIPLFL) has biased composition (polar residues).

This sequence belongs to the rad1 family. As to quaternary structure, component of the checkpoint clamp complex composed of DDC1, MEC3 and RAD17.

Its subcellular location is the nucleus. In terms of biological role, component of the checkpoint clamp complex involved in the surveillance mechanism that allows the DNA repair pathways to act to restore the integrity of the DNA prior to DNA synthesis or separation of the replicated chromosomes. This is DNA damage checkpoint control protein RAD17 (RAD17) from Eremothecium gossypii (strain ATCC 10895 / CBS 109.51 / FGSC 9923 / NRRL Y-1056) (Yeast).